A 149-amino-acid chain; its full sequence is Large ribosomal subunit protein bL9 (149 aa).

This sequence belongs to the bacterial ribosomal protein bL9 family.

Binds to the 23S rRNA. The chain is Large ribosomal subunit protein bL9 from Vibrio vulnificus (strain CMCP6).